A 260-amino-acid polypeptide reads, in one-letter code: Indole-3-glycerol phosphate synthase (260 aa).

The protein belongs to the TrpC family.

The catalysed reaction is 1-(2-carboxyphenylamino)-1-deoxy-D-ribulose 5-phosphate + H(+) = (1S,2R)-1-C-(indol-3-yl)glycerol 3-phosphate + CO2 + H2O. The protein operates within amino-acid biosynthesis; L-tryptophan biosynthesis; L-tryptophan from chorismate: step 4/5. The sequence is that of Indole-3-glycerol phosphate synthase from Staphylococcus aureus (strain MSSA476).